A 184-amino-acid chain; its full sequence is Ribosome-recycling factor (184 aa).

The protein belongs to the RRF family.

The protein localises to the cytoplasm. In terms of biological role, responsible for the release of ribosomes from messenger RNA at the termination of protein biosynthesis. May increase the efficiency of translation by recycling ribosomes from one round of translation to another. This chain is Ribosome-recycling factor, found in Aquifex aeolicus (strain VF5).